Here is a 206-residue protein sequence, read N- to C-terminus: Isochorismatase family protein 1B (206 aa).

Belongs to the isochorismatase family.

The chain is Isochorismatase family protein 1B from Dictyostelium discoideum (Social amoeba).